The primary structure comprises 219 residues: UPF0619 GPI-anchored membrane protein AFUA_3G00880 (219 aa).

The N-terminal stretch at 1 to 16 (MRFALTLTAFVGSVAA) is a signal peptide. Asn-85 carries N-linked (GlcNAc...) asparagine glycosylation. Disordered regions lie at residues 107–144 (SQQF…GTVS) and 160–205 (SSTL…SLTV). Low complexity predominate over residues 114-144 (SSGSSTTSDSTSSASATGSASTSSSSTGTVS). Asn-198 carries the GPI-like-anchor amidated asparagine lipid modification. A propeptide spans 199-219 (GAGSLTVPAGSLLLGLVALAL) (removed in mature form).

This sequence belongs to the UPF0619 family. The GPI-like anchor contains a phosphoceramide lipid group. The anchor position has not been determined.

The protein localises to the cell membrane. The protein is UPF0619 GPI-anchored membrane protein AFUA_3G00880 of Aspergillus fumigatus (strain ATCC MYA-4609 / CBS 101355 / FGSC A1100 / Af293) (Neosartorya fumigata).